We begin with the raw amino-acid sequence, 430 residues long: Probable dual-specificity RNA methyltransferase RlmN (430 aa).

Residue E125 is the Proton acceptor of the active site. The 244-residue stretch at 152–395 folds into the Radical SAM core domain; that stretch reads RHGRVTLCVS…VTVRDTRGRE (244 aa). The cysteines at positions 159 and 400 are disulfide-linked. [4Fe-4S] cluster is bound by residues C166, C170, and C173. S-adenosyl-L-methionine contacts are provided by residues 221–222, S255, 278–280, and N357; these read GE and SLH. The active-site S-methylcysteine intermediate is C400.

It belongs to the radical SAM superfamily. RlmN family. It depends on [4Fe-4S] cluster as a cofactor.

The protein resides in the cytoplasm. It catalyses the reaction adenosine(2503) in 23S rRNA + 2 reduced [2Fe-2S]-[ferredoxin] + 2 S-adenosyl-L-methionine = 2-methyladenosine(2503) in 23S rRNA + 5'-deoxyadenosine + L-methionine + 2 oxidized [2Fe-2S]-[ferredoxin] + S-adenosyl-L-homocysteine. The catalysed reaction is adenosine(37) in tRNA + 2 reduced [2Fe-2S]-[ferredoxin] + 2 S-adenosyl-L-methionine = 2-methyladenosine(37) in tRNA + 5'-deoxyadenosine + L-methionine + 2 oxidized [2Fe-2S]-[ferredoxin] + S-adenosyl-L-homocysteine. Specifically methylates position 2 of adenine 2503 in 23S rRNA and position 2 of adenine 37 in tRNAs. The protein is Probable dual-specificity RNA methyltransferase RlmN of Acidothermus cellulolyticus (strain ATCC 43068 / DSM 8971 / 11B).